A 473-amino-acid polypeptide reads, in one-letter code: Sensor histidine kinase YclK (473 aa).

Over 1 to 9 (MMKIKYLYQ) the chain is Cytoplasmic. The chain crosses the membrane as a helical span at residues 10–30 (LLLSHISILILAFVIIISLFS). The Extracellular segment spans residues 31 to 164 (HFVKEFAYQN…GVEQMVNQVN (134 aa)). The chain crosses the membrane as a helical span at residues 165–185 (LYMFYAVISTLVITILVSWLL). The Cytoplasmic segment spans residues 186–473 (SKFHVKRIQK…IRLPLTAKQQ (288 aa)). Positions 187-239 (KFHVKRIQKLREATDKVASGDYDIHLENSYGDEIGVLASDFNIMAKKLKQSRD) constitute an HAMP domain. The Histidine kinase domain maps to 254–470 (DVSHELKTPL…KFIIRLPLTA (217 aa)). At histidine 257 the chain carries Phosphohistidine; by autocatalysis.

The protein localises to the cell membrane. The catalysed reaction is ATP + protein L-histidine = ADP + protein N-phospho-L-histidine.. Could be member of the two-component regulatory system YclK/YclJ. Potentially phosphorylates YclJ. In Bacillus subtilis (strain 168), this protein is Sensor histidine kinase YclK (yclK).